The following is a 195-amino-acid chain: 3-isopropylmalate dehydratase small subunit (195 aa).

The protein belongs to the LeuD family. LeuD type 1 subfamily. As to quaternary structure, heterodimer of LeuC and LeuD.

It catalyses the reaction (2R,3S)-3-isopropylmalate = (2S)-2-isopropylmalate. The protein operates within amino-acid biosynthesis; L-leucine biosynthesis; L-leucine from 3-methyl-2-oxobutanoate: step 2/4. In terms of biological role, catalyzes the isomerization between 2-isopropylmalate and 3-isopropylmalate, via the formation of 2-isopropylmaleate. The sequence is that of 3-isopropylmalate dehydratase small subunit from Corynebacterium kroppenstedtii (strain DSM 44385 / JCM 11950 / CIP 105744 / CCUG 35717).